The chain runs to 101 residues: Aspartyl/glutamyl-tRNA(Asn/Gln) amidotransferase subunit C (101 aa).

This sequence belongs to the GatC family. Heterotrimer of A, B and C subunits.

It carries out the reaction L-glutamyl-tRNA(Gln) + L-glutamine + ATP + H2O = L-glutaminyl-tRNA(Gln) + L-glutamate + ADP + phosphate + H(+). It catalyses the reaction L-aspartyl-tRNA(Asn) + L-glutamine + ATP + H2O = L-asparaginyl-tRNA(Asn) + L-glutamate + ADP + phosphate + 2 H(+). Functionally, allows the formation of correctly charged Asn-tRNA(Asn) or Gln-tRNA(Gln) through the transamidation of misacylated Asp-tRNA(Asn) or Glu-tRNA(Gln) in organisms which lack either or both of asparaginyl-tRNA or glutaminyl-tRNA synthetases. The reaction takes place in the presence of glutamine and ATP through an activated phospho-Asp-tRNA(Asn) or phospho-Glu-tRNA(Gln). This Lactococcus lactis subsp. cremoris (strain MG1363) protein is Aspartyl/glutamyl-tRNA(Asn/Gln) amidotransferase subunit C.